Here is a 417-residue protein sequence, read N- to C-terminus: 1-deoxy-D-xylulose 5-phosphate reductoisomerase (417 aa).

NADPH contacts are provided by T10, G11, S12, I13, G36, R37, N38, and N130. 1-deoxy-D-xylulose 5-phosphate is bound at residue K131. An NADPH-binding site is contributed by E132. Residue D156 coordinates Mn(2+). 1-deoxy-D-xylulose 5-phosphate is bound by residues S157, E158, S194, and H217. A Mn(2+)-binding site is contributed by E158. G223 is an NADPH binding site. S230, N235, K236, and E239 together coordinate 1-deoxy-D-xylulose 5-phosphate. E239 contacts Mn(2+).

It belongs to the DXR family. It depends on Mg(2+) as a cofactor. The cofactor is Mn(2+).

It catalyses the reaction 2-C-methyl-D-erythritol 4-phosphate + NADP(+) = 1-deoxy-D-xylulose 5-phosphate + NADPH + H(+). It participates in isoprenoid biosynthesis; isopentenyl diphosphate biosynthesis via DXP pathway; isopentenyl diphosphate from 1-deoxy-D-xylulose 5-phosphate: step 1/6. Catalyzes the NADPH-dependent rearrangement and reduction of 1-deoxy-D-xylulose-5-phosphate (DXP) to 2-C-methyl-D-erythritol 4-phosphate (MEP). The polypeptide is 1-deoxy-D-xylulose 5-phosphate reductoisomerase (Synechococcus sp. (strain CC9902)).